The sequence spans 666 residues: Zinc finger protein 710 (666 aa).

Glycyl lysine isopeptide (Lys-Gly) (interchain with G-Cter in SUMO2) cross-links involve residues Lys-110 and Lys-113. A disordered region spans residues 113-141 (KAEEEEEQEVYEVSVPGDDKDPGPAEAPA). 3 consecutive C2H2-type zinc fingers follow at residues 297–319 (WQCRMCEKSYTSKYNLVTHILGH), 325–347 (HSCPHCSKLFKQPSHLQTHLLTH), and 353–375 (HKCQVCHKAFTQTSHLKRHMLLH). A Glycyl lysine isopeptide (Lys-Gly) (interchain with G-Cter in SUMO2) cross-link involves residue Lys-379. 8 consecutive C2H2-type zinc fingers follow at residues 381–403 (YSCHFCGRGFAYPSELKAHEVKH), 409–431 (HVCVECGLDFSTLTQLKRHLASH), 437–459 (YQCLECDKSFHYRSQLQNHMLKH), 465–487 (FVCTECGMEFSQIHHLKQHSLTH), 493–515 (FKCEVCGREFTLQANMKRHMLIH), 521–543 (YQCHICFKTFVQKQTLKTHMIVH), 549–571 (FKCKVCGKSFNRMYNLLGHMHLH), and 577–600 (FKCPYCSSKFNLKGNLSRHMKVKH).

It belongs to the krueppel C2H2-type zinc-finger protein family.

It is found in the nucleus. May be involved in transcriptional regulation. This chain is Zinc finger protein 710 (Znf710), found in Mus musculus (Mouse).